The sequence spans 199 residues: Probable nicotinate-nucleotide adenylyltransferase (199 aa).

Belongs to the NadD family.

It catalyses the reaction nicotinate beta-D-ribonucleotide + ATP + H(+) = deamido-NAD(+) + diphosphate. Its pathway is cofactor biosynthesis; NAD(+) biosynthesis; deamido-NAD(+) from nicotinate D-ribonucleotide: step 1/1. Its function is as follows. Catalyzes the reversible adenylation of nicotinate mononucleotide (NaMN) to nicotinic acid adenine dinucleotide (NaAD). This is Probable nicotinate-nucleotide adenylyltransferase from Corynebacterium jeikeium (strain K411).